Here is a 372-residue protein sequence, read N- to C-terminus: Neutral protease 2 homolog MGYG_06241 (372 aa).

An N-terminal signal peptide occupies residues 1 to 19; the sequence is MQFFTAIAAISALVAPALA. Residues 20–188 constitute a propeptide that is removed on maturation; sequence LPTQELPQAP…THFAGTLNRR (169 aa). 2 disulfide bridges follow: Cys-195/Cys-264 and Cys-271/Cys-289. His-313 provides a ligand contact to Zn(2+). Glu-314 is an active-site residue. 2 residues coordinate Zn(2+): His-317 and Asp-328.

The protein belongs to the peptidase M35 family. Requires Zn(2+) as cofactor.

It localises to the secreted. It catalyses the reaction Preferential cleavage of bonds with hydrophobic residues in P1'. Also 3-Asn-|-Gln-4 and 8-Gly-|-Ser-9 bonds in insulin B chain.. Its function is as follows. Secreted metalloproteinase that allows assimilation of proteinaceous substrates. Shows high activities on basic nuclear substrates such as histone and protamine. May be involved in virulence. In Arthroderma gypseum (strain ATCC MYA-4604 / CBS 118893) (Microsporum gypseum), this protein is Neutral protease 2 homolog MGYG_06241.